Reading from the N-terminus, the 359-residue chain is Peptide chain release factor 1 (359 aa).

Gln236 carries the N5-methylglutamine modification.

This sequence belongs to the prokaryotic/mitochondrial release factor family. In terms of processing, methylated by PrmC. Methylation increases the termination efficiency of RF1.

The protein resides in the cytoplasm. Its function is as follows. Peptide chain release factor 1 directs the termination of translation in response to the peptide chain termination codons UAG and UAA. This chain is Peptide chain release factor 1, found in Streptococcus pneumoniae serotype 4 (strain ATCC BAA-334 / TIGR4).